A 1345-amino-acid chain; its full sequence is CRISPR-associated endonuclease Cas9 (1345 aa).

The active-site For RuvC-like nuclease domain is aspartate 10. Aspartate 10, glutamate 762, and glutamate 766 together coordinate Mg(2+). One can recognise an HNH Cas9-type domain in the interval 770–921 (TNQGRRNSQQ…DKAGFIKRQL (152 aa)). The active-site Proton acceptor for HNH nuclease domain is histidine 840. Residue histidine 983 participates in Mg(2+) binding.

The protein belongs to the CRISPR-associated protein Cas9 family. Subtype II-A subfamily. Monomer. Binds crRNA and tracrRNA. The cofactor is Mg(2+).

Functionally, CRISPR (clustered regularly interspaced short palindromic repeat) is an adaptive immune system that provides protection against mobile genetic elements (viruses, transposable elements and conjugative plasmids). CRISPR clusters contain spacers, sequences complementary to antecedent mobile elements, and target invading nucleic acids. CRISPR clusters are transcribed and processed into CRISPR RNA (crRNA). In type II CRISPR systems correct processing of pre-crRNA requires a trans-encoded small RNA (tracrRNA), endogenous ribonuclease 3 (rnc) and this protein. The tracrRNA serves as a guide for ribonuclease 3-aided processing of pre-crRNA. Subsequently Cas9/crRNA/tracrRNA endonucleolytically cleaves linear or circular dsDNA target complementary to the spacer; Cas9 is inactive in the absence of the 2 guide RNAs (gRNA). Cas9 recognizes the protospacer adjacent motif (PAM) in the CRISPR repeat sequences to help distinguish self versus nonself, as targets within the bacterial CRISPR locus do not have PAMs. PAM recognition is also required for catalytic activity. Complements the gRNA coprocessing defect in a cas9 deletion in S.pyogenes strain 370 and cuts target plasmid in Cas9:gRNAs mixing experiments with S.thermophilus CRISPR3 from strain LMD-9. This is CRISPR-associated endonuclease Cas9 from Streptococcus mutans serotype c (strain ATCC 700610 / UA159).